A 479-amino-acid chain; its full sequence is Deoxyribodipyrimidine photo-lyase (479 aa).

One can recognise a Photolyase/cryptochrome alpha/beta domain in the interval 6-137; that stretch reads SLKAVWFRRD…PFYTFEDAYL (132 aa). Tyr-229 contacts FAD. Arg-233 provides a ligand contact to DNA. Residues 241–245 and 278–285 each bind FAD; these read TSRLS and ELAWRDFY. Interaction with DNA stretches follow at residues 278–285 and 344–345; these read ELAWRDFY and NR. 375–377 is a binding site for FAD; it reads DYD. Residue Gln-407 coordinates DNA.

It belongs to the DNA photolyase class-1 family. Monomer. The cofactor is FAD. Requires (6R)-5,10-methylene-5,6,7,8-tetrahydrofolate as cofactor.

The catalysed reaction is cyclobutadipyrimidine (in DNA) = 2 pyrimidine residues (in DNA).. Functionally, involved in repair of UV radiation-induced DNA damage. Catalyzes the light-dependent monomerization (300-600 nm) of cyclobutyl pyrimidine dimers (in cis-syn configuration), which are formed between adjacent bases on the same DNA strand upon exposure to ultraviolet radiation. The protein is Deoxyribodipyrimidine photo-lyase (phr) of Alkalihalophilus pseudofirmus (strain ATCC BAA-2126 / JCM 17055 / OF4) (Bacillus pseudofirmus).